Here is a 147-residue protein sequence, read N- to C-terminus: Large ribosomal subunit protein bL9 (147 aa).

This sequence belongs to the bacterial ribosomal protein bL9 family.

Binds to the 23S rRNA. The protein is Large ribosomal subunit protein bL9 of Halothermothrix orenii (strain H 168 / OCM 544 / DSM 9562).